Consider the following 107-residue polypeptide: Thioredoxin (107 aa).

The 106-residue stretch at 2-107 folds into the Thioredoxin domain; that stretch reads VVHIENLNAF…TLKQKINDHK (106 aa). Active-site nucleophile residues include Cys-32 and Cys-35. Residues Cys-32 and Cys-35 are joined by a disulfide bond. An S-nitrosocysteine mark is found at Cys-71 and Cys-75.

This sequence belongs to the thioredoxin family. Post-translationally, may be nitrosylated on several cysteine residues, depending on the oxidation state. Nitrosylated Cys-75 may serve as donor for nitrosylation of target proteins.

The protein localises to the nucleus. Its subcellular location is the cytoplasm. The protein resides in the secreted. Participates in various redox reactions through the reversible oxidation of its active center dithiol to a disulfide and catalyzes dithiol-disulfide exchange reactions. Plays a role in the reversible S-nitrosylation of cysteine residues in target proteins, and thereby contributes to the response to intracellular nitric oxide. Nitrosylates the active site Cys of CASP3 in response to nitric oxide (NO), and thereby inhibits caspase-3 activity. Induces the FOS/JUN AP-1 DNA binding activity in ionizing radiation (IR) cells through its oxidation/reduction status and stimulates AP-1 transcriptional activity. The protein is Thioredoxin (txn) of Ictalurus punctatus (Channel catfish).